A 459-amino-acid polypeptide reads, in one-letter code: Exodeoxyribonuclease 7 large subunit (459 aa).

The protein belongs to the XseA family. As to quaternary structure, heterooligomer composed of large and small subunits.

It localises to the cytoplasm. The catalysed reaction is Exonucleolytic cleavage in either 5'- to 3'- or 3'- to 5'-direction to yield nucleoside 5'-phosphates.. Its function is as follows. Bidirectionally degrades single-stranded DNA into large acid-insoluble oligonucleotides, which are then degraded further into small acid-soluble oligonucleotides. The chain is Exodeoxyribonuclease 7 large subunit from Pseudomonas fluorescens (strain ATCC BAA-477 / NRRL B-23932 / Pf-5).